The sequence spans 418 residues: Glutamyl-tRNA reductase (418 aa).

Substrate contacts are provided by residues 49-52 (TCNR), S109, 114-116 (EPQ), and Q120. The Nucleophile role is filled by C50. Residue 189-194 (GAGETI) coordinates NADP(+).

Belongs to the glutamyl-tRNA reductase family. As to quaternary structure, homodimer.

The enzyme catalyses (S)-4-amino-5-oxopentanoate + tRNA(Glu) + NADP(+) = L-glutamyl-tRNA(Glu) + NADPH + H(+). The protein operates within porphyrin-containing compound metabolism; protoporphyrin-IX biosynthesis; 5-aminolevulinate from L-glutamyl-tRNA(Glu): step 1/2. Functionally, catalyzes the NADPH-dependent reduction of glutamyl-tRNA(Glu) to glutamate 1-semialdehyde (GSA). This Salmonella dublin (strain CT_02021853) protein is Glutamyl-tRNA reductase.